A 241-amino-acid chain; its full sequence is Demethylmenaquinone methyltransferase (241 aa).

S-adenosyl-L-methionine is bound by residues Thr60, Asp81, and 106-107; that span reads DA.

It belongs to the class I-like SAM-binding methyltransferase superfamily. MenG/UbiE family.

The enzyme catalyses a 2-demethylmenaquinol + S-adenosyl-L-methionine = a menaquinol + S-adenosyl-L-homocysteine + H(+). Its pathway is quinol/quinone metabolism; menaquinone biosynthesis; menaquinol from 1,4-dihydroxy-2-naphthoate: step 2/2. In terms of biological role, methyltransferase required for the conversion of demethylmenaquinol (DMKH2) to menaquinol (MKH2). This Staphylococcus carnosus (strain TM300) protein is Demethylmenaquinone methyltransferase.